A 622-amino-acid chain; its full sequence is Sodium/potassium/calcium exchanger 4 (622 aa).

The signal sequence occupies residues 1-38 (MALRGLIRQSKVRRRREMLPQQVGFVCAVLALVCCASG). Residues 39 to 97 (LFGSLGHKTASAGKHVLLDTWRNRKLMAPINGTPLAKNCTDPAIHEFPTDLFSNKERQH) are Extracellular-facing. An N-linked (GlcNAc...) asparagine glycan is attached at N76. The chain crosses the membrane as a helical span at residues 98–118 (GAVLLHILGALYMFYALAIVC). The Cytoplasmic portion of the chain corresponds to 119–142 (DDFFVPSLEKICEKLHLSEDVAGA). Residues 139–179 (VAGATFMAAGSSTPELFASVIGVFITHGDVGVGTIVGSAVF) form an Alpha-1 repeat. A helical membrane pass occupies residues 143 to 163 (TFMAAGSSTPELFASVIGVFI). Residues 164–172 (THGDVGVGT) lie on the Extracellular side of the membrane. The helical transmembrane segment at 173–193 (IVGSAVFNILCIIGVCGLFAG) threads the bilayer. The Cytoplasmic segment spans residues 194–200 (QVVRLTW). Residues 201–221 (WAVCRDSVYYTLSVIVLIAFI) form a helical membrane-spanning segment. At 222-224 (YDE) the chain is on the extracellular side. A helical membrane pass occupies residues 225-245 (EIVWWEGLVLIILYVFYILIM). The Cytoplasmic portion of the chain corresponds to 246–457 (KYNMKMQTFF…RWEKFFMVTF (212 aa)). The segment at 358-408 (ANGVNSKPLQNGRHENMENGNVPVENPEDPQQGQEQQPPPQPPPPEPESVE) is disordered. A compositionally biased stretch (pro residues) spans 394 to 404 (QPPPQPPPPEP). Residues 458–478 (ITATLWIAVFSYLMVWLVTII) form a helical membrane-spanning segment. A topological domain (extracellular) is located at residue G479. The chain crosses the membrane as a helical span at residues 480-500 (YTLGIPDVIMGITFLAAGTSV). Residues 495–526 (AAGTSVPDCMASLIVARQGLGDMAVSNTIGSN) form an Alpha-2 repeat. Over 501 to 526 (PDCMASLIVARQGLGDMAVSNTIGSN) the chain is Cytoplasmic. The helical transmembrane segment at 527 to 547 (VFDILVGLGIPWGLQTMVINY) threads the bilayer. The Extracellular portion of the chain corresponds to 548–557 (GSTVKINSRG). The helical transmembrane segment at 558–578 (LVYSVVLLLGSVALTVLGIHL) threads the bilayer. The Cytoplasmic portion of the chain corresponds to 579–586 (NKWRLDRK). The helical transmembrane segment at 587-607 (LGIYVLVLYAVFLCFSIMIEF) threads the bilayer. The Extracellular portion of the chain corresponds to 608 to 622 (NVFTFVNLPMCREDD).

Belongs to the Ca(2+):cation antiporter (CaCA) (TC 2.A.19) family. SLC24A subfamily. As to expression, expressed in late secretory-stage and maturation-stage ameloblasts, with significantly increased expression during the late stages of amelogenesis (at protein level). Widely expressed in most regions of the brain, including hippocampus, neocortex, thalamus, striatum and olfactory bulb. Expressed in the olfactory sensory neurons.

The protein localises to the cell membrane. Its subcellular location is the cytoplasm. The catalysed reaction is Ca(2+)(out) + K(+)(out) + 4 Na(+)(in) = Ca(2+)(in) + K(+)(in) + 4 Na(+)(out). Its function is as follows. Calcium, potassium:sodium antiporter that transports 1 Ca(2+) and 1 K(+) in exchange for 4 Na(+). Controls the rapid response termination and proper regulation of adaptation in olfactory sensory neurons (OSNs) which subsequently influences how odor information is encoded and perceived. May play a role in calcium transport during amelogenesis. In Mus musculus (Mouse), this protein is Sodium/potassium/calcium exchanger 4.